We begin with the raw amino-acid sequence, 201 residues long: Recombination protein RecR (201 aa).

The segment at 57–72 (CADCRTFTEQDVCNIC) adopts a C4-type zinc-finger fold. A Toprim domain is found at 81–176 (GQICVVESPA…EASRIAHGVP (96 aa)).

It belongs to the RecR family.

Functionally, may play a role in DNA repair. It seems to be involved in an RecBC-independent recombinational process of DNA repair. It may act with RecF and RecO. The sequence is that of Recombination protein RecR from Citrobacter koseri (strain ATCC BAA-895 / CDC 4225-83 / SGSC4696).